We begin with the raw amino-acid sequence, 2431 residues long: Histone-lysine N-methyltransferase trr (2431 aa).

Disordered stretches follow at residues 34–78, 135–201, 213–235, and 759–789; these read LQKR…STAP, DADK…ENSG, ASGADSSTSVGNSTGTGTPAGTP, and QSANQIQMATSTSTASNPSTPNPTVNATPMN. Polar residues predominate over residues 142-165; the sequence is YRISTPRNSQSNPLLHRNTAFTSF. 3 stretches are compositionally biased toward low complexity: residues 171-183, 218-235, and 767-787; these read ASSSASSSSSTAS, SSTSVGNSTGTGTPAGTP, and ATSTSTASNPSTPNPTVNATP. The short motif at 801 to 805 is the LXXLL motif 1 element; the sequence is LKQLL. Disordered regions lie at residues 863–895, 918–973, 1226–1292, 1404–1433, and 1478–1500; these read PVPTATQAAGSSSSSGSVATSTTTTTVASGGSS, VGGE…QVKQ, HPQQ…AGGA, TSGGGSPASMSSAASAGSSSAGGGKLKGGS, and GLVGGSARTRSPSPAESPGAEKM. Low complexity-rich tracts occupy residues 866 to 895, 952 to 970, and 1226 to 1241; these read TATQAAGSSSSSGSVATSTTTTTVASGGSS, QQQQQQLHQPQQLQPSPHQ, and HPQQQQQQLHQNQPQN. A compositionally biased stretch (basic residues) spans 1269 to 1281; that stretch reads RKRRKREVQKPRR. The segment covering 1410–1422 has biased composition (low complexity); the sequence is PASMSSAASAGSS. Over residues 1423 to 1433 the composition is skewed to gly residues; sequence SAGGGKLKGGS. T1486 carries the post-translational modification Phosphothreonine. Phosphoserine is present on residues S1488 and S1490. An LXXLL motif 2 motif is present at residues 1652-1656; the sequence is LANLL. The tract at residues 1790 to 1836 is disordered; the sequence is GGSAVKSSNGDSPGSFCASSTAPAEMVVKQEPEDEDEKTPSVPGNPT. Residues 1794 to 1811 are compositionally biased toward polar residues; it reads VKSSNGDSPGSFCASSTA. The C2HC pre-PHD-type zinc-finger motif lies at 1895–1935; that stretch reads TRQCVFCNQRGDGQADGPSRLLNFDVDKWVHLNCALWSNGV. A PHD-type zinc finger spans residues 1956-2003; it reads QACSACHQPGATIKCFKSRCNSLYHLPCAIREECVFYKNKSVHCSVHG. An LXXLL motif 3 motif is present at residues 2060–2064; it reads LSNLL. Positions 2061–2121 constitute an FYR N-terminal domain; the sequence is SNLLRVGNMT…CRYICSIAEA (61 aa). Residues 2122–2209 form the FYR C-terminal domain; the sequence is GCKPEFRIQV…ETLTDYRFKY (88 aa). Residues 2291-2407 form the SET domain; sequence NNVYLARSKI…RGEELSYDYK (117 aa). Positions 2415–2431 constitute a Post-SET domain; the sequence is HKIPCACGAPNCRKWMN.

It belongs to the class V-like SAM-binding methyltransferase superfamily. Histone-lysine methyltransferase family. TRX/MLL subfamily. As to quaternary structure, component of the MLL3/4 complex composed at least of the catalytic subunit trr, ash2, Rbbp5, Dpy-30L1, wds, hcf, ptip, Pa1, Utx, Lpt and Ncoa6. Interacts with nuclear receptor EcR in an ecdysone-dependent manner. Interacts with ash2; the interaction stabilizes trr. As to expression, widely expressed.

The protein resides in the nucleus. The protein localises to the chromosome. It catalyses the reaction L-lysyl(4)-[histone H3] + 3 S-adenosyl-L-methionine = N(6),N(6),N(6)-trimethyl-L-lysyl(4)-[histone H3] + 3 S-adenosyl-L-homocysteine + 3 H(+). Functionally, histone methyltransferase that acts as a coactivator for the ecdysone receptor during development. Specifically trimethylates 'Lys-4' of histone H3, a specific tag for epigenetic transcriptional activation. Recruited by EcR in an ecdysone-dependent manner causing H3 'Lys-4' trimethylation at ecdysone-inducible promoters, leading to activate expression. Plays a central role in the developing compound eye, during the progression of the morphogenetic furrow and in post-furrow differentiation of the retinal epithelium, notably by activating expression of hh. Also required for wing and abdominal development. The protein is Histone-lysine N-methyltransferase trr (trr) of Drosophila melanogaster (Fruit fly).